Consider the following 467-residue polypeptide: Replication factor A 51 kDa subunit (467 aa).

The OB DNA-binding region spans 23–105; that stretch reads WWIRARVADK…SNVNNDYELT (83 aa). The C4-type zinc finger occupies 313–335; that stretch reads CPTCNKKVTEEGAQGDRFRCEKC.

This sequence belongs to the replication factor A protein 1 family. Component of the heterotrimeric canonical replication protein A complex (RPA). Post-translationally, the N-terminus is blocked.

It localises to the nucleus. Its function is as follows. As part of the heterotrimeric replication protein A complex (RPA/RP-A), binds and stabilizes single-stranded DNA intermediates, that form during DNA replication or upon DNA stress. It prevents their reannealing and in parallel, recruits and activates different proteins and complexes involved in DNA metabolism. Thereby, it plays an essential role both in DNA replication and the cellular response to DNA damage. This is Replication factor A 51 kDa subunit (RPA1) from Crithidia fasciculata.